A 123-amino-acid polypeptide reads, in one-letter code: Large ribosomal subunit protein uL29 (123 aa).

Positions 84–123 (RPKKTRAMRRRLNKHEEGLKTKKQQRKERLYPPRKYAVKA) are disordered. Basic residues predominate over residues 86–96 (KKTRAMRRRLN).

It belongs to the universal ribosomal protein uL29 family. Component of the large ribosomal subunit.

The protein localises to the cytoplasm. Its function is as follows. Component of the large ribosomal subunit. The ribosome is a large ribonucleoprotein complex responsible for the synthesis of proteins in the cell. In Ophiophagus hannah (King cobra), this protein is Large ribosomal subunit protein uL29 (RPL35).